The primary structure comprises 609 residues: Phosphoenolpyruvate carboxykinase [GTP] (609 aa).

Residues R81 and 220-222 each bind substrate; that span reads YGG. 2 residues coordinate Mn(2+): K229 and H249. Position 271 (S271) interacts with substrate. 272 to 277 is a binding site for GTP; the sequence is ACGKTN. Residue C273 is part of the active site. D296 is a Mn(2+) binding site. 387 to 389 contributes to the substrate binding site; the sequence is NSR. Residues R389, R420, and 515–518 each bind GTP; that span reads FGEN.

The protein belongs to the phosphoenolpyruvate carboxykinase [GTP] family. Monomer. Mn(2+) is required as a cofactor.

Its subcellular location is the cytoplasm. It catalyses the reaction oxaloacetate + GTP = phosphoenolpyruvate + GDP + CO2. Its pathway is carbohydrate biosynthesis; gluconeogenesis. Its function is as follows. Catalyzes the conversion of oxaloacetate (OAA) to phosphoenolpyruvate (PEP), the rate-limiting step in the metabolic pathway that produces glucose from lactate and other precursors derived from the citric acid cycle. In Mycobacterium marinum (strain ATCC BAA-535 / M), this protein is Phosphoenolpyruvate carboxykinase [GTP].